Consider the following 508-residue polypeptide: Cytochrome P450 monooxygenase orf4 (508 aa).

Cys447 is a heme binding site.

This sequence belongs to the cytochrome P450 family. It depends on heme as a cofactor.

It participates in mycotoxin biosynthesis. In terms of biological role, cytochrome P450 monooxygenase; part of the gene cluster that mediates the biosynthesis of brefeldin A (BFA), a protein transport inhibitor that shows antiviral, antifungal, and antitumor properties. The proposed biosynthesis of BFA involves formation of an acyclic polyketide chain that is differentially tailored throughout the backbone. The highly reducing polyketide synthase Bref-PKS is proposed to synthesize the precisely reduced octaketide precursor, which could then be directly offloaded by the thiohydrolase enzyme Bref-TH followed by a cytochrome P450 monooxygenase-mediated formation of the cyclopentane ring and macrocyclization to afford 7-deoxy BFA. Alternatively, the first ring annulation can also occur on the ACP-tethered intermediate before the thiohydrolase release and lactonization. The C7-hydroxylation by another cytochrome P450 monooxygenase is believed to be the final step in the process to obtain the final structure of BFA. In addition to the HRPKS Bref-PKS and the thiohydrolase Bref-TH, the brefeldin A biosynthesis cluster contains 4 cytochrome p450 monooxygenases (called orf3 to orf6), as well a the probable cluster-specific transcription regulator orf8. This Eupenicillium brefeldianum (Penicillium brefeldianum) protein is Cytochrome P450 monooxygenase orf4.